Reading from the N-terminus, the 485-residue chain is Homeobox protein unplugged (485 aa).

Disordered stretches follow at residues Met1–Glu65, Pro114–Phe157, and Gly212–Ala325. Residues Arg54–Gln64 show a composition bias toward acidic residues. Residues Pro114–Gln128 are compositionally biased toward low complexity. 2 stretches are compositionally biased toward polar residues: residues Gln223–His234 and Asp254–Asn267. Acidic residues predominate over residues Asp284 to Gly293. Residues Ser308–Ser317 are compositionally biased toward low complexity. The homeobox DNA-binding region spans Ser319–Lys378.

In terms of tissue distribution, expressed in the neuroectodermal and mesectodermal cells at the ventral midline of stage 8 embryos, Subsequently, expression domains in the CNS widen and have their most anterior border in the posterior deutocerebrum. Oc/otd and unpg are mutual repressors at the interface of their brain-specific expression domains. Expression fades during germ band retraction and is then restricted to subset of cells by stage 14. Expressed in the founder cells of the cerebral branch within the first tracheal metamere. Outside the CNS, expression is seen in two clusters of ectodermal cells located laterally within the labial and first thoracic segments of stage 9 embryos. By stage 13, the expression is detected in a few cells close to the dorsal midline of the embryos.

It localises to the nucleus. Functionally, plays a regulatory role in neural branching of the tracheae: segment-specific aspects of these neural branching patterns appear to be generated by homeotic regulation of expression. May have a role with oc/otd in the postembryonic development of the brain. This chain is Homeobox protein unplugged, found in Drosophila melanogaster (Fruit fly).